Reading from the N-terminus, the 260-residue chain is tRNA (guanine-N(1)-)-methyltransferase (260 aa).

Residues G117 and 137–142 contribute to the S-adenosyl-L-methionine site; that span reads LGDFVL.

It belongs to the RNA methyltransferase TrmD family. In terms of assembly, homodimer.

It is found in the cytoplasm. It carries out the reaction guanosine(37) in tRNA + S-adenosyl-L-methionine = N(1)-methylguanosine(37) in tRNA + S-adenosyl-L-homocysteine + H(+). Specifically methylates guanosine-37 in various tRNAs. The chain is tRNA (guanine-N(1)-)-methyltransferase from Cupriavidus necator (strain ATCC 17699 / DSM 428 / KCTC 22496 / NCIMB 10442 / H16 / Stanier 337) (Ralstonia eutropha).